The chain runs to 265 residues: Probable trehalose-phosphate phosphatase (265 aa).

The active-site Nucleophile is the Asp-35. Residues Asp-35, Asp-37, and Asp-213 each contribute to the Mg(2+) site. Position 35-37 (Asp-35–Asp-37) interacts with substrate.

This sequence belongs to the trehalose phosphatase family. Mg(2+) is required as a cofactor.

The catalysed reaction is alpha,alpha-trehalose 6-phosphate + H2O = alpha,alpha-trehalose + phosphate. It participates in glycan biosynthesis; trehalose biosynthesis. Its function is as follows. Removes the phosphate from trehalose 6-phosphate to produce free trehalose. This is Probable trehalose-phosphate phosphatase (otsB) from Sinorhizobium fredii (strain NBRC 101917 / NGR234).